Here is an 86-residue protein sequence, read N- to C-terminus: RNA-binding protein Hfq (86 aa).

Residues 9-68 enclose the Sm domain; the sequence is DPYLNTLRKEKVPVSIYLVNGIKLQGSIESFDQFVVLLKNTVSQMVYKHAISTVVPARPV. The segment at 67 to 86 is disordered; it reads PVRLPSPTDGEHGDSEPGNA. Basic and acidic residues predominate over residues 75–86; it reads DGEHGDSEPGNA.

The protein belongs to the Hfq family. As to quaternary structure, homohexamer.

Its function is as follows. RNA chaperone that binds small regulatory RNA (sRNAs) and mRNAs to facilitate mRNA translational regulation in response to envelope stress, environmental stress and changes in metabolite concentrations. Also binds with high specificity to tRNAs. The protein is RNA-binding protein Hfq of Pseudomonas putida (strain GB-1).